Consider the following 349-residue polypeptide: Tetraacyldisaccharide 4'-kinase (349 aa).

Position 58 to 65 (58 to 65 (TAGGSGKT)) interacts with ATP.

This sequence belongs to the LpxK family.

The enzyme catalyses a lipid A disaccharide + ATP = a lipid IVA + ADP + H(+). Its pathway is glycolipid biosynthesis; lipid IV(A) biosynthesis; lipid IV(A) from (3R)-3-hydroxytetradecanoyl-[acyl-carrier-protein] and UDP-N-acetyl-alpha-D-glucosamine: step 6/6. Functionally, transfers the gamma-phosphate of ATP to the 4'-position of a tetraacyldisaccharide 1-phosphate intermediate (termed DS-1-P) to form tetraacyldisaccharide 1,4'-bis-phosphate (lipid IVA). The sequence is that of Tetraacyldisaccharide 4'-kinase from Shewanella amazonensis (strain ATCC BAA-1098 / SB2B).